Here is a 207-residue protein sequence, read N- to C-terminus: Hemin/hemoglobin-binding protein 1 (207 aa).

The N-terminal stretch at 1-27 is a signal peptide; it reads MKKVLVFAAFIVLFSFSFLSTGLTAQA. The 120-residue stretch at 29–148 folds into the NEAT domain; sequence LKDGTYSVDY…RFDEGSAKAL (120 aa). The segment at 151–178 is disordered; sequence AVKSSDNNTTTPATKSDSSNKVTNPKSS. Polar residues predominate over residues 154 to 178; sequence SSDNNTTTPATKSDSSNKVTNPKSS. The NPKXZ sorting signal motif lies at 174 to 178; it reads NPKSS. Ser-177 is modified (murein peptidoglycan amidated serine). A propeptide spans 178–207 (removed by sortase B); it reads SDSSQMFLYGIIFVATGAGLILLKRRAIFK.

The protein localises to the secreted. It is found in the cell wall. Its function is as follows. Binds both host hemin and hemoglobin with affinity in the nanomolar range and presumably directs it to membrane transporters. The chain is Hemin/hemoglobin-binding protein 1 from Listeria monocytogenes serovar 1/2a (strain ATCC BAA-679 / EGD-e).